A 165-amino-acid polypeptide reads, in one-letter code: Small ribosomal subunit protein uS5 (165 aa).

In terms of domain architecture, S5 DRBM spans L10 to V73.

This sequence belongs to the universal ribosomal protein uS5 family. In terms of assembly, part of the 30S ribosomal subunit. Contacts proteins S4 and S8.

Its function is as follows. With S4 and S12 plays an important role in translational accuracy. Functionally, located at the back of the 30S subunit body where it stabilizes the conformation of the head with respect to the body. This Clostridium acetobutylicum (strain ATCC 824 / DSM 792 / JCM 1419 / IAM 19013 / LMG 5710 / NBRC 13948 / NRRL B-527 / VKM B-1787 / 2291 / W) protein is Small ribosomal subunit protein uS5.